We begin with the raw amino-acid sequence, 629 residues long: tRNA uridine 5-carboxymethylaminomethyl modification enzyme MnmG (629 aa).

Residues glycine 14–glycine 19, valine 126, and serine 181 contribute to the FAD site. Glycine 273–phenylalanine 287 provides a ligand contact to NAD(+). Glutamine 370 provides a ligand contact to FAD.

It belongs to the MnmG family. As to quaternary structure, homodimer. Heterotetramer of two MnmE and two MnmG subunits. Requires FAD as cofactor.

The protein resides in the cytoplasm. In terms of biological role, NAD-binding protein involved in the addition of a carboxymethylaminomethyl (cmnm) group at the wobble position (U34) of certain tRNAs, forming tRNA-cmnm(5)s(2)U34. In Geobacillus thermodenitrificans (strain NG80-2), this protein is tRNA uridine 5-carboxymethylaminomethyl modification enzyme MnmG.